The sequence spans 706 residues: UvrABC system protein C (706 aa).

The 80-residue stretch at 16-95 (VEPGVYRFRD…IKEFDPRFNV (80 aa)) folds into the GIY-YIG domain. A UVR domain is found at 208–243 (DRLAKDMEQQMTAAAEQLDFERAARLRDDISALKRA). The segment at 651–706 (APQNGTAPDPAPGTGDPQTPADPHSAATAADIEDDRHATGATGPQMNGSEQQVDRV) is disordered. The segment covering 692-706 (TGPQMNGSEQQVDRV) has biased composition (polar residues).

The protein belongs to the UvrC family. In terms of assembly, interacts with UvrB in an incision complex.

The protein resides in the cytoplasm. Functionally, the UvrABC repair system catalyzes the recognition and processing of DNA lesions. UvrC both incises the 5' and 3' sides of the lesion. The N-terminal half is responsible for the 3' incision and the C-terminal half is responsible for the 5' incision. The polypeptide is UvrABC system protein C (Mycolicibacterium smegmatis (strain ATCC 700084 / mc(2)155) (Mycobacterium smegmatis)).